We begin with the raw amino-acid sequence, 209 residues long: Small ribosomal subunit protein uS3 (209 aa).

The KH type-2 domain maps to 38 to 107; it reads IRNFIKKNYN…KFGIDIIELK (70 aa).

This sequence belongs to the universal ribosomal protein uS3 family. As to quaternary structure, part of the 30S ribosomal subunit. Forms a tight complex with proteins S10 and S14.

In terms of biological role, binds the lower part of the 30S subunit head. Binds mRNA in the 70S ribosome, positioning it for translation. In Fervidobacterium nodosum (strain ATCC 35602 / DSM 5306 / Rt17-B1), this protein is Small ribosomal subunit protein uS3.